Reading from the N-terminus, the 90-residue chain is Putative regulatory protein cce_4590 (90 aa).

Belongs to the RemA family.

In Crocosphaera subtropica (strain ATCC 51142 / BH68) (Cyanothece sp. (strain ATCC 51142)), this protein is Putative regulatory protein cce_4590.